The chain runs to 443 residues: Palmitoyltransferase pfa5 (443 aa).

The next 2 membrane-spanning stretches (helical) occupy residues 17 to 37 (IIPPILIGVFGYASYAITKPL) and 57 to 77 (AGAAILAIYYVLLIPVLATYL). The tract at residues 96–137 (CTQNQTGSDGSKHRHRRHRRRKSGHHLSKTTEKTDRSDGGDV) is disordered. The segment covering 107 to 123 (KHRHRRHRRRKSGHHLS) has biased composition (basic residues). Positions 124 to 137 (KTTEKTDRSDGGDV) are enriched in basic and acidic residues. Residues 175–225 (VYCSTCCQFKTDRAHHCREVDRCVRKMDHFCPWVGGVVSETSFKFFIQFIV) form the DHHC domain. The next 2 membrane-spanning stretches (helical) occupy residues 220–240 (FIQFIVYTMIYCIFVLIVFAI) and 256–276 (WIVCLALSSLFGFFTFGVAIS). The segment at 410-443 (AGLEVSTESESADPVGAAETPQHEQRRGKHRRRN) is disordered.

It belongs to the DHHC palmitoyltransferase family. PFA5 subfamily. Post-translationally, autopalmitoylated.

The protein resides in the membrane. It carries out the reaction L-cysteinyl-[protein] + hexadecanoyl-CoA = S-hexadecanoyl-L-cysteinyl-[protein] + CoA. The polypeptide is Palmitoyltransferase pfa5 (pfa5) (Aspergillus fumigatus (strain ATCC MYA-4609 / CBS 101355 / FGSC A1100 / Af293) (Neosartorya fumigata)).